The chain runs to 219 residues: Kappa-scoloptoxin(11)-Ss1a (219 aa).

The N-terminal stretch at 1–16 (MFYSHLLFFTFTFACS) is a signal peptide. Residues 17-25 (SSLNRKTKR) constitute a propeptide that is removed on maturation.

Post-translationally, contains 8 disulfide bonds. In terms of tissue distribution, expressed by the venom gland.

It localises to the secreted. Functionally, voltage-gated potassium channel inhibitor. The chain is Kappa-scoloptoxin(11)-Ss1a from Scolopendra dehaani (Thai centipede).